Reading from the N-terminus, the 254-residue chain is Precorrin-3B C(17)-methyltransferase (254 aa).

Belongs to the precorrin methyltransferase family.

It catalyses the reaction precorrin-3B + S-adenosyl-L-methionine = precorrin-4 + S-adenosyl-L-homocysteine + 3 H(+). Its pathway is cofactor biosynthesis; adenosylcobalamin biosynthesis; cob(II)yrinate a,c-diamide from precorrin-2 (aerobic route): step 3/10. Functionally, methyltransferase that catalyzes the methylation of C-17 in precorrin-3B to form precorrin-4. The polypeptide is Precorrin-3B C(17)-methyltransferase (cobJ) (Sinorhizobium sp).